The sequence spans 648 residues: ATP-dependent zinc metalloprotease FtsH 4 (648 aa).

The Cytoplasmic portion of the chain corresponds to 1–6; sequence MKQSHK. Residues 7-27 traverse the membrane as a helical segment; sequence TLLLWVLLIMMFLAIWQFLSP. Topologically, residues 28 to 111 are periplasmic; that stretch reads DSRPATQVAF…VFFEKEDTSP (84 aa). A helical membrane pass occupies residues 112–132; it reads FWPGAIMYLLPTVFLLVMFYL. Topologically, residues 133–648 are cytoplasmic; the sequence is FMRQLQAGGG…FGTPKPAPST (516 aa). An ATP-binding site is contributed by 205–212; it reads GPPGTGKT. His427 is a Zn(2+) binding site. The active site involves Glu428. 2 residues coordinate Zn(2+): His431 and Asp504. The interval 622-648 is disordered; sequence YSDRDRAAKEKRRAASIFGTPKPAPST.

It in the central section; belongs to the AAA ATPase family. This sequence in the C-terminal section; belongs to the peptidase M41 family. In terms of assembly, homohexamer. Requires Zn(2+) as cofactor.

It localises to the cell inner membrane. In terms of biological role, acts as a processive, ATP-dependent zinc metallopeptidase for both cytoplasmic and membrane proteins. Plays a role in the quality control of integral membrane proteins. This is ATP-dependent zinc metalloprotease FtsH 4 from Sorangium cellulosum (strain So ce56) (Polyangium cellulosum (strain So ce56)).